The sequence spans 256 residues: Imidazole glycerol phosphate synthase subunit HisF (256 aa).

Catalysis depends on residues D12 and D131.

This sequence belongs to the HisA/HisF family. As to quaternary structure, heterodimer of HisH and HisF.

The protein resides in the cytoplasm. It carries out the reaction 5-[(5-phospho-1-deoxy-D-ribulos-1-ylimino)methylamino]-1-(5-phospho-beta-D-ribosyl)imidazole-4-carboxamide + L-glutamine = D-erythro-1-(imidazol-4-yl)glycerol 3-phosphate + 5-amino-1-(5-phospho-beta-D-ribosyl)imidazole-4-carboxamide + L-glutamate + H(+). Its pathway is amino-acid biosynthesis; L-histidine biosynthesis; L-histidine from 5-phospho-alpha-D-ribose 1-diphosphate: step 5/9. Functionally, IGPS catalyzes the conversion of PRFAR and glutamine to IGP, AICAR and glutamate. The HisF subunit catalyzes the cyclization activity that produces IGP and AICAR from PRFAR using the ammonia provided by the HisH subunit. The chain is Imidazole glycerol phosphate synthase subunit HisF from Bifidobacterium longum (strain DJO10A).